Here is a 285-residue protein sequence, read N- to C-terminus: UPF0354 protein MW1686 (285 aa).

It belongs to the UPF0354 family.

In Staphylococcus aureus (strain MW2), this protein is UPF0354 protein MW1686.